A 554-amino-acid polypeptide reads, in one-letter code: Glucose-6-phosphate isomerase 2 (554 aa).

The active-site Proton donor is glutamate 359. Residues histidine 390 and lysine 518 contribute to the active site.

The protein belongs to the GPI family.

It is found in the cytoplasm. It carries out the reaction alpha-D-glucose 6-phosphate = beta-D-fructose 6-phosphate. The protein operates within carbohydrate biosynthesis; gluconeogenesis. Its pathway is carbohydrate degradation; glycolysis; D-glyceraldehyde 3-phosphate and glycerone phosphate from D-glucose: step 2/4. In terms of biological role, catalyzes the reversible isomerization of glucose-6-phosphate to fructose-6-phosphate. The protein is Glucose-6-phosphate isomerase 2 of Pseudomonas putida (strain ATCC 47054 / DSM 6125 / CFBP 8728 / NCIMB 11950 / KT2440).